We begin with the raw amino-acid sequence, 118 residues long: Basic phospholipase A2 PA-5 (118 aa).

7 disulfides stabilise this stretch: cysteine 11-cysteine 71, cysteine 27-cysteine 117, cysteine 29-cysteine 45, cysteine 44-cysteine 98, cysteine 51-cysteine 91, cysteine 60-cysteine 84, and cysteine 78-cysteine 89. Tyrosine 28, glycine 30, and glycine 32 together coordinate Ca(2+). Histidine 48 is a catalytic residue. Residue aspartate 49 participates in Ca(2+) binding. Aspartate 92 is a catalytic residue.

The protein belongs to the phospholipase A2 family. Group I subfamily. D49 sub-subfamily. It depends on Ca(2+) as a cofactor. As to expression, expressed by the venom gland.

It localises to the secreted. The enzyme catalyses a 1,2-diacyl-sn-glycero-3-phosphocholine + H2O = a 1-acyl-sn-glycero-3-phosphocholine + a fatty acid + H(+). Its function is as follows. PLA2 catalyzes the calcium-dependent hydrolysis of the 2-acyl groups in 3-sn-phosphoglycerides. The polypeptide is Basic phospholipase A2 PA-5 (Pseudechis australis (Mulga snake)).